Here is a 143-residue protein sequence, read N- to C-terminus: Ribosome-binding factor A (143 aa).

The span at 119–129 shows a compositional bias: basic and acidic residues; the sequence is AVGDKPAVPRD. The interval 119–143 is disordered; it reads AVGDKPAVPRDDNDDPVSDNPERDA.

Belongs to the RbfA family. Monomer. Binds 30S ribosomal subunits, but not 50S ribosomal subunits or 70S ribosomes.

The protein localises to the cytoplasm. In terms of biological role, one of several proteins that assist in the late maturation steps of the functional core of the 30S ribosomal subunit. Associates with free 30S ribosomal subunits (but not with 30S subunits that are part of 70S ribosomes or polysomes). Required for efficient processing of 16S rRNA. May interact with the 5'-terminal helix region of 16S rRNA. The protein is Ribosome-binding factor A of Marinobacter nauticus (strain ATCC 700491 / DSM 11845 / VT8) (Marinobacter aquaeolei).